We begin with the raw amino-acid sequence, 79 residues long: MEEQVLSLLEELCEDEVVREDLDINLRDEGLLDSLGFVEMLVRMEEVFGFATAPTEVTYEEIDTPRRVMAYVKKRVAAL.

One can recognise a Carrier domain in the interval 1–76; the sequence is MEEQVLSLLE…RVMAYVKKRV (76 aa). Ser-34 bears the O-(pantetheine 4'-phosphoryl)serine mark.

It belongs to the DltC family. 4'-phosphopantetheine is transferred from CoA to a specific serine of apo-DCP.

The protein resides in the cytoplasm. It functions in the pathway cell wall biogenesis; lipoteichoic acid biosynthesis. Functionally, carrier protein involved in the D-alanylation of lipoteichoic acid (LTA). The loading of thioester-linked D-alanine onto DltC is catalyzed by D-alanine--D-alanyl carrier protein ligase DltA. The DltC-carried D-alanyl group is further transferred to cell membrane phosphatidylglycerol (PG) by forming an ester bond, probably catalyzed by DltD. D-alanylation of LTA plays an important role in modulating the properties of the cell wall in Gram-positive bacteria, influencing the net charge of the cell wall. The sequence is that of D-alanyl carrier protein from Abiotrophia defectiva (Streptococcus defectivus).